Reading from the N-terminus, the 303-residue chain is Light-independent protochlorophyllide reductase iron-sulfur ATP-binding protein (303 aa).

The tract at residues 1–24 (MSSVLERPAAPAILPSRQDGEGSV) is disordered. Residues 47 to 52 (GIGKST) and lysine 76 contribute to the ATP site. Serine 51 serves as a coordination point for Mg(2+). Cysteine 132 and cysteine 166 together coordinate [4Fe-4S] cluster. ATP contacts are provided by residues 217 to 218 (NR) and 241 to 243 (PDL).

It belongs to the NifH/BchL/ChlL family. Homodimer. Protochlorophyllide reductase is composed of three subunits; BchL, BchN and BchB. The cofactor is [4Fe-4S] cluster.

It carries out the reaction chlorophyllide a + oxidized 2[4Fe-4S]-[ferredoxin] + 2 ADP + 2 phosphate = protochlorophyllide a + reduced 2[4Fe-4S]-[ferredoxin] + 2 ATP + 2 H2O. It participates in porphyrin-containing compound metabolism; bacteriochlorophyll biosynthesis (light-independent). Its function is as follows. Component of the dark-operative protochlorophyllide reductase (DPOR) that uses Mg-ATP and reduced ferredoxin to reduce ring D of protochlorophyllide (Pchlide) to form chlorophyllide a (Chlide). This reaction is light-independent. The L component serves as a unique electron donor to the NB-component of the complex, and binds Mg-ATP. The polypeptide is Light-independent protochlorophyllide reductase iron-sulfur ATP-binding protein (Rhodospirillum centenum (strain ATCC 51521 / SW)).